We begin with the raw amino-acid sequence, 143 residues long: Transcriptional regulator MraZ (143 aa).

2 SpoVT-AbrB domains span residues Glu-5 to Glu-47 and Ala-76 to Thr-119.

The protein belongs to the MraZ family. Forms oligomers.

It is found in the cytoplasm. Its subcellular location is the nucleoid. This chain is Transcriptional regulator MraZ, found in Staphylococcus haemolyticus (strain JCSC1435).